Consider the following 279-residue polypeptide: Undecaprenyl-diphosphatase (279 aa).

8 consecutive transmembrane segments (helical) span residues 2-22 (LIIELLKAIFFGIIEGITEWL), 44-64 (AFIEMFNIVIQLGAIIAVMLI), 85-105 (WQLWLKVVIACIPSILIAVPL), 113-133 (FYFMVPIAIALIVYGIAFIWI), 163-183 (VLSIVPGTSRSGATILGAIIL), 188-208 (TVAADFTFFLAIPTMFGYSGL), 223-243 (AQVLILLVASLTAFVVSLLAI), and 255-275 (FTIFGKYRIVLGSLLLIYSFF).

The protein belongs to the UppP family.

The protein localises to the cell membrane. The catalysed reaction is di-trans,octa-cis-undecaprenyl diphosphate + H2O = di-trans,octa-cis-undecaprenyl phosphate + phosphate + H(+). In terms of biological role, catalyzes the dephosphorylation of undecaprenyl diphosphate (UPP). Confers resistance to bacitracin. The chain is Undecaprenyl-diphosphatase from Streptococcus pyogenes serotype M12 (strain MGAS2096).